Consider the following 201-residue polypeptide: Imidazole glycerol phosphate synthase subunit HisH (201 aa).

Residues 1–201 (MIAIIDYGAG…LLKRYEEMIR (201 aa)) form the Glutamine amidotransferase type-1 domain. C79 acts as the Nucleophile in catalysis. Catalysis depends on residues H181 and E183.

As to quaternary structure, heterodimer of HisH and HisF.

The protein resides in the cytoplasm. It catalyses the reaction 5-[(5-phospho-1-deoxy-D-ribulos-1-ylimino)methylamino]-1-(5-phospho-beta-D-ribosyl)imidazole-4-carboxamide + L-glutamine = D-erythro-1-(imidazol-4-yl)glycerol 3-phosphate + 5-amino-1-(5-phospho-beta-D-ribosyl)imidazole-4-carboxamide + L-glutamate + H(+). The catalysed reaction is L-glutamine + H2O = L-glutamate + NH4(+). It functions in the pathway amino-acid biosynthesis; L-histidine biosynthesis; L-histidine from 5-phospho-alpha-D-ribose 1-diphosphate: step 5/9. Its function is as follows. IGPS catalyzes the conversion of PRFAR and glutamine to IGP, AICAR and glutamate. The HisH subunit catalyzes the hydrolysis of glutamine to glutamate and ammonia as part of the synthesis of IGP and AICAR. The resulting ammonia molecule is channeled to the active site of HisF. The chain is Imidazole glycerol phosphate synthase subunit HisH from Oceanobacillus iheyensis (strain DSM 14371 / CIP 107618 / JCM 11309 / KCTC 3954 / HTE831).